The chain runs to 488 residues: Pre-glycoprotein polyprotein GP complex (488 aa).

Residue glycine 2 is the site of N-myristoyl glycine; by host attachment. Residues 2 to 17 (GQLFSFFEEVPNIIHE) are Extracellular-facing. Residues 18-32 (AINIALIAVSLIAAL) form a helical membrane-spanning segment. Position 33 (lysine 33) is a topological domain, cytoplasmic. A helical transmembrane segment spans residues 34-53 (GMINLWKSGLFQLIFFLTLA). Extracellular-side segments run 54 to 58 (GRSCS) and 59 to 427 (FRIG…TLVD). Cysteine 57 lines the Zn(2+) pocket. Residues asparagine 69, asparagine 88, asparagine 99, asparagine 125, asparagine 171, asparagine 178, and asparagine 222 are each glycosylated (N-linked (GlcNAc...) asparagine; by host). 4 cysteine pairs are disulfide-bonded: cysteine 85-cysteine 229, cysteine 274-cysteine 287, cysteine 296-cysteine 305, and cysteine 359-cysteine 380. Asparagine 360, asparagine 368, asparagine 385, and asparagine 390 each carry an N-linked (GlcNAc...) asparagine; by host glycan. The helical transmembrane segment at 428–448 (ICFWSTLFFTTTLFLHLVGFP) threads the bilayer. Over 449-488 (THRHIRGEPCPLPHRLNSRGGCRCGKYPELKKPITWHKNH) the chain is Cytoplasmic. Zn(2+) is bound by residues histidine 450, histidine 452, cysteine 458, histidine 462, cysteine 470, cysteine 472, and histidine 488.

Belongs to the arenaviridae GPC protein family. As to quaternary structure, homotetramer; disulfide-linked. Homotetramer. GP2 homotetramers bind through ionic interactions with GP1 homotetramers to form the GP complex together with the stable signal peptide. The GP-C polyprotein interacts with the host protease MBTPS1/SKI-1 resulting in the polyprotein processing. In terms of processing, specific enzymatic cleavages in vivo yield mature proteins. GP-C polyprotein is cleaved in the endoplasmic reticulum by the host protease MBTPS1. Only cleaved glycoprotein is incorporated into virions. The SSP remains stably associated with the GP complex following cleavage by signal peptidase and plays crucial roles in the trafficking of GP through the secretory pathway. Post-translationally, myristoylation is necessary for GP2-mediated fusion activity.

It is found in the virion membrane. It localises to the host endoplasmic reticulum membrane. The protein resides in the host Golgi apparatus membrane. The protein localises to the host cell membrane. In terms of biological role, interacts with the host receptor. Mediates virus attachment to host TFRC. This attachment induces virion internalization predominantly through clathrin-mediated endocytosis. Its function is as follows. Class I viral fusion protein that directs fusion of viral and host endosomal membranes, leading to delivery of the nucleocapsid into the cytoplasm. Membrane fusion is mediated by irreversible conformational changes induced upon acidification in the endosome. Functionally, stable signal peptide (SSP): cleaved and functions as a signal peptide. In addition, it is also retained as the third component of the GP complex. The SSP is required for efficient glycoprotein expression, post-translational maturation cleavage of GP1 and GP2, glycoprotein transport to the cell surface plasma membrane, formation of infectious virus particles, and acid pH-dependent glycoprotein-mediated cell fusion. The sequence is that of Pre-glycoprotein polyprotein GP complex from Homo sapiens (Human).